We begin with the raw amino-acid sequence, 442 residues long: MSKTYHFIGIKGSGMSALALMLHQMGHKVQGSDVEKYYFTQRGLEQAGITILPFSEDNITPDMELIVGNAFRENNKEVAYALRHQIPFKRYHDFLGDFMKSFISFAVAGAHGKTSTTGLLSHVLKNITDTSYLIGDGTGRGSANAQYFVFESDEYERHFMPYHPEYSIITNIDFDHPDYFTGIADVRNAFNDYAKQVKKALFVYGEDDELKKIEAPAPIYYYGFEEGNDFIAYDITRTTNGSDFKVKHQGEVIGQFHVPAYGKHNILNATAVIANLFVAGIDMALVADHLKTFSGVKRRFTEKIINDTIIIDDFAHHPTEIVATIDAARQKYPSKEIVAIFQPHTFTRTIALLEDFACALNEADSVYLAQIYGSAREVDKGEVKVEDLAAKIIKPSQVVTVENVSPLLDHDNAVYVFMGAGDIQLYEHSFEELLANLTKNNQ.

109–115 (GAHGKTS) contributes to the ATP binding site.

Belongs to the MurCDEF family.

The protein resides in the cytoplasm. The enzyme catalyses UDP-N-acetyl-alpha-D-muramate + L-alanine + ATP = UDP-N-acetyl-alpha-D-muramoyl-L-alanine + ADP + phosphate + H(+). Its pathway is cell wall biogenesis; peptidoglycan biosynthesis. Its function is as follows. Cell wall formation. The chain is UDP-N-acetylmuramate--L-alanine ligase from Streptococcus pyogenes serotype M49 (strain NZ131).